The following is a 464-amino-acid chain: MSLSLWQQCLARLQDELPATEFSMWIRPLQAELSDNTLALYAPNRFVLDWVRDKYLNNINGLLNDFCGTDAPLLRFEVGSKPITQVISQTVTASVSSAPAAPAARTAAPSRPSWDNAAAQPELSYRSNVNPKHTFDNFVEGKSNQLARAAARQVADNPGGAYNPLFLYGGTGLGKTHLLHAVGNGIMARKANAKVVYMHSERFVQDMVKALQNNAIEEFKRYYRSVDALLIDDIQFFANKERSQEEFFHTFNALLEGNQQIILTSDRYPKEINGVEDRLKSRFGWGLTVAIEPPELETRVAILMKKADENDIRLPGEVAFFIAKRLRSNVRELEGALNRVIANANFTGRAITIDFVREALRDLLALQEKLVTIDNIQKTVAEYYKIKVADLLSKRRSRSVARPRQMAMALAKELTNHSLPEIGDAFGGRDHTTVLHACRKIEQLREESHDIKEDFSNLIRTLSS.

Residues 1–82 (MSLSLWQQCL…LLRFEVGSKP (82 aa)) form a domain I, interacts with DnaA modulators region. The tract at residues 82–127 (PITQVISQTVTASVSSAPAAPAARTAAPSRPSWDNAAAQPELSYRS) is domain II. Positions 98–113 (APAAPAARTAAPSRPS) are enriched in low complexity. The interval 98–117 (APAAPAARTAAPSRPSWDNA) is disordered. The domain III, AAA+ region stretch occupies residues 128–344 (NVNPKHTFDN…GALNRVIANA (217 aa)). Glycine 172, glycine 174, lysine 175, and threonine 176 together coordinate ATP. The interval 345–464 (NFTGRAITID…FSNLIRTLSS (120 aa)) is domain IV, binds dsDNA.

This sequence belongs to the DnaA family. Oligomerizes as a right-handed, spiral filament on DNA at oriC.

It localises to the cytoplasm. Its function is as follows. Plays an important role in the initiation and regulation of chromosomal replication. Binds to the origin of replication; it binds specifically double-stranded DNA at a 9 bp consensus (dnaA box): 5'-TTATC[CA]A[CA]A-3'. DnaA binds to ATP and to acidic phospholipids. DnaA can inhibit its own gene expression as well as that of other genes. Functionally, plays an essential role in the initiation and regulation of chromosomal replication. ATP-DnaA binds to the origin of replication (oriC) to initiate formation of the DNA replication initiation complex once per cell cycle. Binds the DnaA box (a 9 base pair repeat at the origin) and separates the double-stranded (ds)DNA. Forms a right-handed helical filament on oriC DNA; dsDNA binds to the exterior of the filament while single-stranded (ss)DNA is stabiized in the filament's interior. The ATP-DnaA-oriC complex binds and stabilizes one strand of the AT-rich DNA unwinding element (DUE), permitting loading of DNA polymerase. After initiation quickly degrades to an ADP-DnaA complex that is not apt for DNA replication. Binds acidic phospholipids. This chain is Chromosomal replication initiator protein DnaA, found in Serratia marcescens.